The following is a 69-amino-acid chain: Probable rubredoxin HupI (69 aa).

In terms of domain architecture, Rubredoxin-like spans valine 16–isoleucine 67. 4 residues coordinate Fe cation: cysteine 21, cysteine 24, cysteine 54, and cysteine 57.

This sequence belongs to the rubredoxin family. It depends on Fe(3+) as a cofactor.

Functionally, could be an electron transport intermediate in hydrogen oxidation. The polypeptide is Probable rubredoxin HupI (hupI) (Bradyrhizobium diazoefficiens (strain JCM 10833 / BCRC 13528 / IAM 13628 / NBRC 14792 / USDA 110)).